The chain runs to 442 residues: Mitochondrial distribution and morphology protein 12 (442 aa).

One can recognise an SMP-LTD domain in the interval 1 to 442 (MSIDINWEAA…VYPSFWTFLV (442 aa)). Disordered regions lie at residues 67–125 (NDFY…RVGY), 202–277 (LSLA…RRMR), and 364–387 (EGYH…RRSN). Residues 69-80 (FYEEDEDGEDLS) are compositionally biased toward acidic residues. A compositionally biased stretch (polar residues) spans 90 to 100 (PSSQGLSQSTP). Residues 101–112 (NGDAGSSNSSSN) show a composition bias toward low complexity. Basic and acidic residues predominate over residues 213–222 (RQRERARSSD). Positions 227 to 245 (SPQSRSRPSTSSTRQRTST) are enriched in low complexity.

It belongs to the MDM12 family. In terms of assembly, component of the ER-mitochondria encounter structure (ERMES) or MDM complex, composed of MMM1, MDM10, MDM12 and MDM34. An MMM1 homodimer associates with one molecule of MDM12 on each side in a pairwise head-to-tail manner, and the SMP-LTD domains of MMM1 and MDM12 generate a continuous hydrophobic tunnel for phospholipid trafficking.

It localises to the mitochondrion outer membrane. The protein resides in the endoplasmic reticulum membrane. Component of the ERMES/MDM complex, which serves as a molecular tether to connect the endoplasmic reticulum (ER) and mitochondria. Components of this complex are involved in the control of mitochondrial shape and protein biogenesis, and function in nonvesicular lipid trafficking between the ER and mitochondria. MDM12 is required for the interaction of the ER-resident membrane protein MMM1 and the outer mitochondrial membrane-resident beta-barrel protein MDM10. The MDM12-MMM1 subcomplex functions in the major beta-barrel assembly pathway that is responsible for biogenesis of all mitochondrial outer membrane beta-barrel proteins, and acts in a late step after the SAM complex. The MDM10-MDM12-MMM1 subcomplex further acts in the TOM40-specific pathway after the action of the MDM12-MMM1 complex. Essential for establishing and maintaining the structure of mitochondria and maintenance of mtDNA nucleoids. This chain is Mitochondrial distribution and morphology protein 12, found in Arthroderma otae (strain ATCC MYA-4605 / CBS 113480) (Microsporum canis).